The following is an 855-amino-acid chain: MILIPRMLLVLFLLLPILSSAKAQVNPAICRYPLGMSGGQIPDEDITASSQWSESTAAKYGRLDSEEGDGAWCPEIPVEPDDLKEFLQIDLHTLHFITLVGTQGRHAGGHGIEFAPMYKINYSRDGTRWISWRNRHGKQVLDGNSNPYDIFLKDLEPPIVARFVRFIPVTDHSMNVCMRVELYGCVWLDGLVSYNAPAGQQFVLPGGSIIYLNDSVYDGAVGYSMTEGLGQLTDGVSGLDDFTQTHEYHVWPGYDYVGWRNESATNGYIEIMFEFDRIRNFTTMKVHCNNMFAKGVKIFKEVQCYFRSEASEWEPNAISFPLVLDDVNPSARFVTVPLHHRMASAIKCQYHFADTWMMFSEITFQSDAAMYNNSEALPTSPMAPTTYDPMLKVDDSNTRILIGCLVAIIFILLAIIVIILWRQFWQKMLEKASRRMLDDEMTVSLSLPSDSSMFNNNRSSSPSEQGSNSTYDRIFPLRPDYQEPSRLIRKLPEFAPGEEESGCSGVVKPVQPSGPEGVPHYAEADIVNLQGVTGGNTYSVPAVTMDLLSGKDVAVEEFPRKLLTFKEKLGEGQFGEVHLCEVEGMEKFKDKDFALDVSANQPVLVAVKMLRADANKNARNDFLKEIKIMSRLKDPNIIHLLAVCITDDPLCMITEYMENGDLNQFLSRHEPPNSSSSDVRTVSYTNLKFMATQIASGMKYLSSLNFVHRDLATRNCLVGKNYTIKIADFGMSRNLYSGDYYRIQGRAVLPIRWMSWESILLGKFTTASDVWAFGVTLWETFTFCQEQPYSQLSDEQVIENTGEFFRDQGRQTYLPQPAICPDSVYKLMLSCWRRDTKNRPSFQEIHLLLLQQGDE.

The signal sequence occupies residues 1–21 (MILIPRMLLVLFLLLPILSSA). Residues 22–399 (KAQVNPAICR…MLKVDDSNTR (378 aa)) lie on the Extracellular side of the membrane. Positions 30-185 (CRYPLGMSGG…VCMRVELYGC (156 aa)) constitute an F5/8 type C domain. 2 disulfide bridges follow: Cys30/Cys185 and Cys73/Cys177. Residues Asn121, Asn213, Asn261, Asn280, and Asn372 are each glycosylated (N-linked (GlcNAc...) asparagine). A helical transmembrane segment spans residues 400 to 421 (ILIGCLVAIIFILLAIIVIILW). Topologically, residues 422-855 (RQFWQKMLEK…HLLLLQQGDE (434 aa)) are cytoplasmic. The disordered stretch occupies residues 452 to 471 (SMFNNNRSSSPSEQGSNSTY). Tyr471 bears the Phosphotyrosine; by SRC and autocatalysis mark. The Protein kinase domain maps to 563–849 (LTFKEKLGEG…PSFQEIHLLL (287 aa)). ATP-binding positions include 569–577 (LGEGQFGEV) and Lys608. The active-site Proton acceptor is the Asp710. A phosphotyrosine; by SRC and autocatalysis mark is found at Tyr736, Tyr740, and Tyr741.

This sequence belongs to the protein kinase superfamily. Tyr protein kinase family. Insulin receptor subfamily. As to quaternary structure, binds hydroxyproline-rich sequence motifs in fibrillar, glycosylated collagen, such as the GQOGVMGFO motif, where O stands for hydroxyproline. Interacts with SRC. Interacts (tyrosine phosphorylated) with SHC1. Post-translationally, N-glycosylated. Tyrosine phosphorylated in response to collagen binding. Phosphorylated by SRC; this is required for activation and subsequent autophosphorylation on additional tyrosine residues. In terms of tissue distribution, detected in osteocytes, osteoblastic cells in subchondral bone, bone lining cells, tibia and cartilage (at protein level). Detected at high levels in heart and lung, and at low levels in brain, placenta, liver, skeletal muscle, pancreas, and kidney.

Its subcellular location is the cell membrane. The enzyme catalyses L-tyrosyl-[protein] + ATP = O-phospho-L-tyrosyl-[protein] + ADP + H(+). With respect to regulation, present in an inactive state in the absence of collagen binding and phosphorylation by SRC. Tyrosine phosphorylation enhances the affinity for ATP and the catalytic activity. Functionally, tyrosine kinase involved in the regulation of tissues remodeling. It functions as a cell surface receptor for fibrillar collagen and regulates cell differentiation, remodeling of the extracellular matrix, cell migration and cell proliferation. Required for normal bone development. Regulates osteoblast differentiation and chondrocyte maturation via a signaling pathway that involves MAP kinases and leads to the activation of the transcription factor RUNX2. Regulates remodeling of the extracellular matrix by up-regulation of the collagenases MMP1, MMP2 and MMP13, and thereby facilitates cell migration and tumor cell invasion. Promotes fibroblast migration and proliferation, and thereby contributes to cutaneous wound healing. This is Discoidin domain-containing receptor 2 (DDR2) from Homo sapiens (Human).